A 325-amino-acid chain; its full sequence is Elongation factor P--(R)-beta-lysine ligase (325 aa).

Position 76–78 (76–78 (SPE)) interacts with substrate. ATP contacts are provided by residues 100–102 (RNE) and asparagine 109. Residue tyrosine 118 coordinates substrate. ATP is bound at residue 244–245 (EL). Substrate is bound at residue glutamate 251. Glycine 300 contributes to the ATP binding site.

This sequence belongs to the class-II aminoacyl-tRNA synthetase family. EpmA subfamily. In terms of assembly, homodimer.

It carries out the reaction D-beta-lysine + L-lysyl-[protein] + ATP = N(6)-((3R)-3,6-diaminohexanoyl)-L-lysyl-[protein] + AMP + diphosphate + H(+). In terms of biological role, with EpmB is involved in the beta-lysylation step of the post-translational modification of translation elongation factor P (EF-P). Catalyzes the ATP-dependent activation of (R)-beta-lysine produced by EpmB, forming a lysyl-adenylate, from which the beta-lysyl moiety is then transferred to the epsilon-amino group of a conserved specific lysine residue in EF-P. This chain is Elongation factor P--(R)-beta-lysine ligase, found in Erwinia tasmaniensis (strain DSM 17950 / CFBP 7177 / CIP 109463 / NCPPB 4357 / Et1/99).